We begin with the raw amino-acid sequence, 369 residues long: MEPIQKMDSLNNKEGQPDKKRKKHESEKEGENEVLEIDVTKPVPPSKKLMRKLRKAGKIDKDGNWTPEALEEAKKKEEKRLKRLDAKYGRKEEGESQEESKRSPWGIWVGNLSFHTTKEILTDFFVRETSEMIKEVSEENIKPITTEQITRIHMPMSKEKRFQNKGFAYVDFATEDALKLALQCSEKALNGRNILIKSNTDFSGRPSKPANTLSKTASIQSSKKEPSSILFVGNLDFETTDADLKEHFGQVGQIRRVRLMTFEDTGKCKGFGFVDFPDIDTCMKAMELGHNSWRLEYGEDRSKRMRNKSPMARSGRFNDAESLGQEDKPNFKRARKIDPRSVRPGAALAKAQRSSAAIVEPAGQKIKFD.

Disordered stretches follow at residues 1 to 77 (MEPI…KKKE), 200 to 219 (TDFS…TASI), and 304 to 369 (RMRN…IKFD). The region spanning 105–206 (WGIWVGNLSF…KSNTDFSGRP (102 aa)) is the RRM 1 domain. Polar residues predominate over residues 209–219 (PANTLSKTASI). Residues 228 to 310 (SILFVGNLDF…RSKRMRNKSP (83 aa)) enclose the RRM 2 domain. Residues 325-341 (QEDKPNFKRARKIDPRS) show a composition bias toward basic and acidic residues. Low complexity predominate over residues 346–357 (AALAKAQRSSAA).

It localises to the nucleus. The chain is RNA-binding protein rnp24 (rnp24) from Schizosaccharomyces pombe (strain 972 / ATCC 24843) (Fission yeast).